We begin with the raw amino-acid sequence, 240 residues long: Nudix hydrolase 3 (240 aa).

A Nudix hydrolase domain is found at 50-190 (NSAMSVLIPL…RMKYTLPSFD (141 aa)). The Nudix box signature appears at 89–110 (GRMDPGETTTETALRETFEEIG). Mg(2+)-binding residues include E104 and E108.

The protein belongs to the Nudix hydrolase family. PCD1 subfamily. The cofactor is Mn(2+). Mg(2+) serves as cofactor.

In terms of biological role, probably mediates the hydrolysis of some nucleoside diphosphate derivatives. The polypeptide is Nudix hydrolase 3 (ndx-3) (Caenorhabditis elegans).